The primary structure comprises 622 residues: Cytochrome c oxidase subunit 1 (622 aa).

Topologically, residues 1 to 27 (MLNALTEKRTRGSMLWDYLTTVDHKKI) are extracellular. Residues 28–46 (AILYLVAGGFFFLVGGIEA) form a helical membrane-spanning segment. Topologically, residues 47-68 (MFIRIQLAKPENAFLSAQAYNE) are cytoplasmic. A helical transmembrane segment spans residues 69 to 88 (VMTMHGTTMIFLAAMPLLFA). H73 serves as a coordination point for Fe(II)-heme a. Residues 89–110 (LMNAVVPLQIGARDVSFPFLNA) are Extracellular-facing. The chain crosses the membrane as a helical span at residues 111-128 (LGFWLFFFGGIFLNLSWF). At 129-159 (LGGAPDAGWTSYASLSLHSKGHGIDFFVLGL) the chain is on the cytoplasmic side. The chain crosses the membrane as a helical span at residues 160 to 178 (QISGLGTLIAGINFLATII). The Extracellular segment spans residues 179-196 (NMRAPGMTYMRLPLFTWT). Residues 197 to 215 (TFVASALILFAFPPLTVGL) traverse the membrane as a helical segment. The Cytoplasmic portion of the chain corresponds to 216 to 241 (ALMMLDRLFGTNFFNPELGGNTVIWE). Residues 242-261 (HLFWIFGHPEVYILILPAFG) form a helical membrane-spanning segment. Residues H249 and Y253 each contribute to the Cu cation site. Positions 249–253 (HPEVY) form a cross-link, 1'-histidyl-3'-tyrosine (His-Tyr). Topologically, residues 262-284 (IFSEVIPVFARKRLFGYSSMVFA) are extracellular. Residues 285 to 304 (IVLIGFLGFMVWVHHMFTTG) traverse the membrane as a helical segment. Positions 298 and 299 each coordinate Cu cation. At 305–312 (LGPIANAI) the chain is on the cytoplasmic side. A helical transmembrane segment spans residues 313 to 331 (FAVATMAIAIPTGIKIFNW). At 332–346 (LLTIWGGNVKYTTAM) the chain is on the extracellular side. The chain crosses the membrane as a helical span at residues 347-366 (LYAVSFIPSFVLGGVTGVML). Topologically, residues 367–374 (AAAAADYQ) are cytoplasmic. Residues 375-394 (FHDTYFVVAHFHYVIIGGVV) form a helical membrane-spanning segment. Heme a3 is bound at residue H384. H386 is a binding site for Fe(II)-heme a. Over 395–421 (FGLLAGVHFWWPKMFGKILHETMGKIS) the chain is Extracellular. The helical transmembrane segment at 422 to 441 (FVLFFIGFHLTFFIQHFVGL) threads the bilayer. Topologically, residues 442–459 (MGMPRRVYTFLPGQGLET) are cytoplasmic. A helical membrane pass occupies residues 460-479 (GNLISTIGAFFMAAAVILLL). Topologically, residues 480–552 (VNVIWTSVKG…EPVDDIHMPN (73 aa)) are extracellular. Residues 553-572 (GSILPLIISFGLFVAAFGLL) traverse the membrane as a helical segment. The Cytoplasmic segment spans residues 573–580 (YRSDYAWG). A helical membrane pass occupies residues 581–604 (LPVIFIGLGITFITMLLRSVIDDH). Over 605–622 (GYHIHKEELPNDDKGVKA) the chain is Cytoplasmic.

Belongs to the heme-copper respiratory oxidase family. Cu(2+) is required as a cofactor. The cofactor is heme.

It is found in the cell membrane. It catalyses the reaction 4 Fe(II)-[cytochrome c] + O2 + 8 H(+)(in) = 4 Fe(III)-[cytochrome c] + 2 H2O + 4 H(+)(out). It functions in the pathway energy metabolism; oxidative phosphorylation. Its function is as follows. Cytochrome c oxidase is the component of the respiratory chain that catalyzes the reduction of oxygen to water. Subunits 1-3 form the functional core of the enzyme complex. Co I is the catalytic subunit of the enzyme. Electrons originating in cytochrome c are transferred via the copper A center of subunit 2 and heme a of subunit 1 to the bimetallic center formed by heme a3 and copper B. This cytochrome c oxidase shows proton pump activity across the membrane in addition to the electron transfer. The chain is Cytochrome c oxidase subunit 1 (ctaD) from Bacillus subtilis (strain 168).